Reading from the N-terminus, the 639-residue chain is 1-deoxy-D-xylulose-5-phosphate synthase (639 aa).

Thiamine diphosphate is bound by residues histidine 79 and 120–122 (AHS). Position 151 (aspartate 151) interacts with Mg(2+). Thiamine diphosphate is bound by residues 152-153 (GA), asparagine 180, tyrosine 289, and glutamate 371. Asparagine 180 contacts Mg(2+).

It belongs to the transketolase family. DXPS subfamily. Homodimer. Mg(2+) is required as a cofactor. It depends on thiamine diphosphate as a cofactor.

The enzyme catalyses D-glyceraldehyde 3-phosphate + pyruvate + H(+) = 1-deoxy-D-xylulose 5-phosphate + CO2. The protein operates within metabolic intermediate biosynthesis; 1-deoxy-D-xylulose 5-phosphate biosynthesis; 1-deoxy-D-xylulose 5-phosphate from D-glyceraldehyde 3-phosphate and pyruvate: step 1/1. Its function is as follows. Catalyzes the acyloin condensation reaction between C atoms 2 and 3 of pyruvate and glyceraldehyde 3-phosphate to yield 1-deoxy-D-xylulose-5-phosphate (DXP). This is 1-deoxy-D-xylulose-5-phosphate synthase from Rhizorhabdus wittichii (strain DSM 6014 / CCUG 31198 / JCM 15750 / NBRC 105917 / EY 4224 / RW1) (Sphingomonas wittichii).